Consider the following 261-residue polypeptide: Triosephosphate isomerase (261 aa).

Position 10–12 (10–12) interacts with substrate; the sequence is NWK. Histidine 100 serves as the catalytic Electrophile. Catalysis depends on glutamate 172, which acts as the Proton acceptor. Residues glycine 178, serine 218, and 239-240 contribute to the substrate site; that span reads GG.

It belongs to the triosephosphate isomerase family. Homodimer.

Its subcellular location is the cytoplasm. The catalysed reaction is D-glyceraldehyde 3-phosphate = dihydroxyacetone phosphate. It participates in carbohydrate biosynthesis; gluconeogenesis. It functions in the pathway carbohydrate degradation; glycolysis; D-glyceraldehyde 3-phosphate from glycerone phosphate: step 1/1. Functionally, involved in the gluconeogenesis. Catalyzes stereospecifically the conversion of dihydroxyacetone phosphate (DHAP) to D-glyceraldehyde-3-phosphate (G3P). This Mycobacterium sp. (strain JLS) protein is Triosephosphate isomerase.